Here is a 144-residue protein sequence, read N- to C-terminus: 3-hydroxyacyl-[acyl-carrier-protein] dehydratase FabZ (144 aa).

His49 is an active-site residue.

Belongs to the thioester dehydratase family. FabZ subfamily.

It localises to the cytoplasm. It carries out the reaction a (3R)-hydroxyacyl-[ACP] = a (2E)-enoyl-[ACP] + H2O. Functionally, involved in unsaturated fatty acids biosynthesis. Catalyzes the dehydration of short chain beta-hydroxyacyl-ACPs and long chain saturated and unsaturated beta-hydroxyacyl-ACPs. This is 3-hydroxyacyl-[acyl-carrier-protein] dehydratase FabZ from Clostridium kluyveri (strain NBRC 12016).